We begin with the raw amino-acid sequence, 90 residues long: Defensin-like protein 293 (90 aa).

Positions Met-1–Ala-26 are cleaved as a signal peptide. Cystine bridges form between Cys-63–Cys-83, Cys-69–Cys-88, and Cys-75–Cys-90.

The protein belongs to the DEFL family.

It localises to the secreted. This chain is Defensin-like protein 293, found in Arabidopsis thaliana (Mouse-ear cress).